A 614-amino-acid polypeptide reads, in one-letter code: UvrABC system protein C (614 aa).

A GIY-YIG domain is found at 16–94 (SRPGVYRMFG…VKSLKPRFNV (79 aa)). One can recognise a UVR domain in the interval 204–239 (GELQKRLASEMEAASEAMEFETAARLRDRIRAIAHV).

Belongs to the UvrC family. Interacts with UvrB in an incision complex.

The protein resides in the cytoplasm. In terms of biological role, the UvrABC repair system catalyzes the recognition and processing of DNA lesions. UvrC both incises the 5' and 3' sides of the lesion. The N-terminal half is responsible for the 3' incision and the C-terminal half is responsible for the 5' incision. The protein is UvrABC system protein C of Hyphomonas neptunium (strain ATCC 15444).